Here is a 359-residue protein sequence, read N- to C-terminus: MPTHKKIIQDLTKEELAEKIKPAFRSKQIYDWIYHKYAASFEEMKNLPKAMREELDAEYTLAPLKTVTVQDSMDGSRKYLFELHDGHTVEAVLLLMRDKEYHEDGSVKHQERYTVCISSQVGCKVGCAFCLTAKGGFMRNLTAGEIVEQLRMIKKDNDIAANRRVNIVFMGMGEPLDNLEAVAKSVKIFAEEEGMAIAPHRQTISTSGLSSKIEKLGKMELGVNLAISLHAVDDELRQQLMPINKAYNIESIITAVKNFPVNDRKRVMFEYLVIKDVNDDISAAKKLLSLLDGIKAKVNLIYFNPYGGTEFKRPSEADMKKFQEYLTKRGLHCTIRESKGLDISAACGQLREQELEGEI.

E90 functions as the Proton acceptor in the catalytic mechanism. The region spanning 109 to 342 (HQERYTVCIS…CTIRESKGLD (234 aa)) is the Radical SAM core domain. An intrachain disulfide couples C116 to C347. [4Fe-4S] cluster is bound by residues C123, C127, and C130. Residues 173-174 (GE), S205, 228-230 (SLH), and N304 each bind S-adenosyl-L-methionine. C347 acts as the S-methylcysteine intermediate in catalysis.

Belongs to the radical SAM superfamily. RlmN family. Requires [4Fe-4S] cluster as cofactor.

The protein localises to the cytoplasm. The enzyme catalyses adenosine(2503) in 23S rRNA + 2 reduced [2Fe-2S]-[ferredoxin] + 2 S-adenosyl-L-methionine = 2-methyladenosine(2503) in 23S rRNA + 5'-deoxyadenosine + L-methionine + 2 oxidized [2Fe-2S]-[ferredoxin] + S-adenosyl-L-homocysteine. The catalysed reaction is adenosine(37) in tRNA + 2 reduced [2Fe-2S]-[ferredoxin] + 2 S-adenosyl-L-methionine = 2-methyladenosine(37) in tRNA + 5'-deoxyadenosine + L-methionine + 2 oxidized [2Fe-2S]-[ferredoxin] + S-adenosyl-L-homocysteine. Its function is as follows. Specifically methylates position 2 of adenine 2503 in 23S rRNA and position 2 of adenine 37 in tRNAs. m2A2503 modification seems to play a crucial role in the proofreading step occurring at the peptidyl transferase center and thus would serve to optimize ribosomal fidelity. This Sulfurovum sp. (strain NBC37-1) protein is Dual-specificity RNA methyltransferase RlmN.